Consider the following 260-residue polypeptide: Imidazole glycerol phosphate synthase subunit HisF (260 aa).

Active-site residues include Asp-12 and Asp-131.

It belongs to the HisA/HisF family. As to quaternary structure, heterodimer of HisH and HisF.

The protein resides in the cytoplasm. The catalysed reaction is 5-[(5-phospho-1-deoxy-D-ribulos-1-ylimino)methylamino]-1-(5-phospho-beta-D-ribosyl)imidazole-4-carboxamide + L-glutamine = D-erythro-1-(imidazol-4-yl)glycerol 3-phosphate + 5-amino-1-(5-phospho-beta-D-ribosyl)imidazole-4-carboxamide + L-glutamate + H(+). Its pathway is amino-acid biosynthesis; L-histidine biosynthesis; L-histidine from 5-phospho-alpha-D-ribose 1-diphosphate: step 5/9. In terms of biological role, IGPS catalyzes the conversion of PRFAR and glutamine to IGP, AICAR and glutamate. The HisF subunit catalyzes the cyclization activity that produces IGP and AICAR from PRFAR using the ammonia provided by the HisH subunit. The protein is Imidazole glycerol phosphate synthase subunit HisF of Corynebacterium jeikeium (strain K411).